The chain runs to 211 residues: Octanoyltransferase (211 aa).

The BPL/LPL catalytic domain occupies Gly-28–Leu-203. Residues Arg-66–His-73, Ser-133–Gly-135, and Gly-146–Ala-148 each bind substrate. The Acyl-thioester intermediate role is filled by Cys-164.

This sequence belongs to the LipB family.

The protein resides in the cytoplasm. It carries out the reaction octanoyl-[ACP] + L-lysyl-[protein] = N(6)-octanoyl-L-lysyl-[protein] + holo-[ACP] + H(+). The protein operates within protein modification; protein lipoylation via endogenous pathway; protein N(6)-(lipoyl)lysine from octanoyl-[acyl-carrier-protein]: step 1/2. Functionally, catalyzes the transfer of endogenously produced octanoic acid from octanoyl-acyl-carrier-protein onto the lipoyl domains of lipoate-dependent enzymes. Lipoyl-ACP can also act as a substrate although octanoyl-ACP is likely to be the physiological substrate. The polypeptide is Octanoyltransferase (Syntrophotalea carbinolica (strain DSM 2380 / NBRC 103641 / GraBd1) (Pelobacter carbinolicus)).